A 245-amino-acid chain; its full sequence is Probable phosphatase ECA2529 (245 aa).

Residues His-7, His-9, His-15, His-40, Glu-73, His-101, His-131, Asp-192, and His-194 each contribute to the Zn(2+) site.

It belongs to the PHP family. In terms of assembly, homotrimer. The cofactor is Zn(2+).

The chain is Probable phosphatase ECA2529 from Pectobacterium atrosepticum (strain SCRI 1043 / ATCC BAA-672) (Erwinia carotovora subsp. atroseptica).